The sequence spans 472 residues: Acyltransferase PapA3 (472 aa).

This sequence belongs to the PapA acyltransferase family.

It carries out the reaction a long-chain fatty acyl-CoA + alpha,alpha-trehalose = a 2-O-(long-chain fatty acyl)-alpha,alpha-trehalose + CoA. The catalysed reaction is a mycolipenoyl-CoA + a 2-O-(long-chain fatty acyl)-alpha,alpha-trehalose = a 2-O-(long-chain fatty acyl)-3-O-mycolipenoyl-trehalose + CoA. It catalyses the reaction alpha,alpha-trehalose + hexadecanoyl-CoA = 2-O-hexadecanoyl-alpha,alpha-trehalose + CoA. The enzyme catalyses 2-O-hexadecanoyl-alpha,alpha-trehalose + hexadecanoyl-CoA = 2-O,3-O-dihexadecanoyl-alpha,alpha-trehalose + CoA. Functionally, involved in the biosynthesis of polyacyltrehalose (PAT), a pentaacylated, trehalose-based glycolipid that could have a role in anchoring the bacterial capsule. Catalyzes the sequential transfer of two palmitoyl groups onto a single glucose residue of trehalose generating the diacylated product 2,3-diacyltrehalose (trehalose dipalmitate). The sequence is that of Acyltransferase PapA3 (papA3) from Mycobacterium tuberculosis (strain CDC 1551 / Oshkosh).